A 547-amino-acid polypeptide reads, in one-letter code: Methionine--tRNA ligase (547 aa).

The 'HIGH' region motif lies at 15-25 (PYANGSLHLGH). Zn(2+)-binding residues include Cys-146, Cys-149, Cys-159, and Cys-162. Positions 332 to 336 (KMSKS) match the 'KMSKS' region motif. Residue Lys-335 participates in ATP binding.

The protein belongs to the class-I aminoacyl-tRNA synthetase family. MetG type 1 subfamily. As to quaternary structure, monomer. Zn(2+) serves as cofactor.

The protein resides in the cytoplasm. It catalyses the reaction tRNA(Met) + L-methionine + ATP = L-methionyl-tRNA(Met) + AMP + diphosphate. Functionally, is required not only for elongation of protein synthesis but also for the initiation of all mRNA translation through initiator tRNA(fMet) aminoacylation. The sequence is that of Methionine--tRNA ligase from Baumannia cicadellinicola subsp. Homalodisca coagulata.